Here is a 68-residue protein sequence, read N- to C-terminus: Phosphatidylinositol N-acetylglucosaminyltransferase ERI1 subunit (68 aa).

A run of 2 helical transmembrane segments spans residues 8 to 28 (FLVLGFTYSVLLISLATFYWL) and 34 to 54 (FLHYWCVLLLCPATLWLWALI).

Component of the phosphatidylinositol N-acetylglucosaminyltransferase (GPI-GlcNAc transferase) complex composed of at least GPI1, GPI2, GPI3, GPI15, GPI19 and ERI1. Interacts with GPI2. Interacts with GTP-bound RAS2 in an effector loop-dependent manner.

The protein localises to the endoplasmic reticulum membrane. Its pathway is glycolipid biosynthesis; glycosylphosphatidylinositol-anchor biosynthesis. Probable component of the GPI-GlcNAc transferase (GPI-GnT) complex in the endoplasmic reticulum, a complex that catalyzes transfer of GlcNAc from UDP-GlcNAc to an acceptor phosphatidylinositol, the first step in the production of GPI-anchors for cell surface proteins. Ras may inhibit the enzyme activity of the GPI-GnT complex via the association between ERI1 and RAS2. The polypeptide is Phosphatidylinositol N-acetylglucosaminyltransferase ERI1 subunit (ERI1) (Saccharomyces cerevisiae (strain ATCC 204508 / S288c) (Baker's yeast)).